Consider the following 278-residue polypeptide: Serine/threonine-protein phosphatase PGAM5, mitochondrial (278 aa).

A helical membrane pass occupies residues Leu-7–Gly-27.

This sequence belongs to the phosphoglycerate mutase family. BPG-dependent PGAM subfamily. In terms of processing, phosphorylated by the RIPK1/RIPK3 complex under necrotic conditions. This phosphorylation increases PGAM5 phosphatase activity.

It is found in the mitochondrion outer membrane. It carries out the reaction O-phospho-L-seryl-[protein] + H2O = L-seryl-[protein] + phosphate. It catalyses the reaction O-phospho-L-threonyl-[protein] + H2O = L-threonyl-[protein] + phosphate. Its function is as follows. Displays phosphatase activity for serine/threonine residues. Has apparently no phosphoglycerate mutase activity. May be regulator of mitochondrial dynamics. May be a central mediator for programmed necrosis. This Xenopus tropicalis (Western clawed frog) protein is Serine/threonine-protein phosphatase PGAM5, mitochondrial (pgam5).